Here is a 269-residue protein sequence, read N- to C-terminus: JmjC domain-containing protein 8 (269 aa).

Positions methionine 1–proline 24 are cleaved as a signal peptide. N-linked (GlcNAc...) asparagine glycans are attached at residues asparagine 135, asparagine 145, and asparagine 214. The JmjC domain maps to aspartate 136–glycine 269.

In terms of assembly, oligomer. Dimer. Interacts with PKM; regulates angiogenesis and metabolism. N-glycosylated.

It is found in the endoplasmic reticulum lumen. The protein resides in the cytoplasm. Functionally, functions as a positive regulator of TNF-induced NF-kappaB signaling. Regulates angiogenesis and cellular metabolism through interaction with PKM. This is JmjC domain-containing protein 8 from Mus musculus (Mouse).